A 180-amino-acid chain; its full sequence is Large ribosomal subunit protein uL6 (180 aa).

Belongs to the universal ribosomal protein uL6 family. In terms of assembly, part of the 50S ribosomal subunit.

Its function is as follows. This protein binds to the 23S rRNA, and is important in its secondary structure. It is located near the subunit interface in the base of the L7/L12 stalk, and near the tRNA binding site of the peptidyltransferase center. The protein is Large ribosomal subunit protein uL6 of Borrelia recurrentis (strain A1).